The sequence spans 2298 residues: Protein Ycf2 (2298 aa).

1652–1659 (GSIGTGRS) lines the ATP pocket.

Belongs to the Ycf2 family.

The protein resides in the plastid. Its subcellular location is the chloroplast stroma. Functionally, probable ATPase of unknown function. Its presence in a non-photosynthetic plant (Epifagus virginiana) and experiments in tobacco indicate that it has an essential function which is probably not related to photosynthesis. The sequence is that of Protein Ycf2 from Aethionema cordifolium (Lebanon stonecress).